A 123-amino-acid chain; its full sequence is DNA-directed RNA polymerase I subunit RPA12 (123 aa).

Cys-17, Cys-20, Cys-35, Cys-38, Cys-84, and Cys-87 together coordinate Zn(2+). The C4-type zinc finger occupies 17-38; sequence CPDCGSVLPLPGVQDTVICPRC. The segment at 80–120 adopts a TFIIS-type zinc-finger fold; that stretch reads VDRRCSRCGHEGMAYYTRQMRSADEGQTVFYTCINCKFQEK. The short motif at 103-104 is the Hairpin element; it reads DE. Zn(2+) is bound by residues Cys-112 and Cys-115.

This sequence belongs to the archaeal RpoM/eukaryotic RPA12/RPB9/RPC11 RNA polymerase family. As to quaternary structure, component of the RNA polymerase I (Pol I) complex consisting of 13 subunits: a ten-subunit catalytic core composed of POLR1A/RPA1, POLR1B/RPA2, POLR1C/RPAC1, POLR1D/RPAC2, POLR1H/RPA12, POLR2E/RPABC1, POLR2F/RPABC2, POLR2H/RPABC3, POLR2K/RPABC4 and POLR2L/RPABC5; a mobile stalk subunit POLR1F/RPA43 protruding from the core and additional subunits homologous to general transcription factors POLR1E/RPA49 and POLR1G/RPA34. Part of Pol I pre-initiation complex (PIC), in which Pol I core assembles with RRN3 and promoter-bound UTBF and SL1/TIF-IB complex.

Its subcellular location is the nucleus. It is found in the nucleolus. Its function is as follows. Core component of RNA polymerase I (Pol I), a DNA-dependent RNA polymerase which synthesizes ribosomal RNA precursors using the four ribonucleoside triphosphates as substrates. Can mediate Pol I proofreading of the nascent RNA transcript. Anchors into the Pol I active site to monitor transcription fidelity and cleave mis-incorporated 5'-ribonucleotides. This Rattus norvegicus (Rat) protein is DNA-directed RNA polymerase I subunit RPA12.